The sequence spans 271 residues: Thiosulfate sulfurtransferase (271 aa).

Rhodanese domains lie at 21 to 129 (SAPE…PLSR) and 159 to 270 (GAAD…TPVE). Catalysis depends on cysteine 230, which acts as the Cysteine persulfide intermediate. Arginine 235 is a substrate binding site.

It is found in the cytoplasm. It catalyses the reaction thiosulfate + hydrogen cyanide = thiocyanate + sulfite + 2 H(+). This chain is Thiosulfate sulfurtransferase (rhdA), found in Azotobacter vinelandii.